Here is a 183-residue protein sequence, read N- to C-terminus: Nucleoside triphosphate pyrophosphatase (183 aa).

Residue Asp71 is the Proton acceptor of the active site.

It belongs to the Maf family. The cofactor is a divalent metal cation.

It is found in the cytoplasm. It catalyses the reaction a ribonucleoside 5'-triphosphate + H2O = a ribonucleoside 5'-phosphate + diphosphate + H(+). The enzyme catalyses a 2'-deoxyribonucleoside 5'-triphosphate + H2O = a 2'-deoxyribonucleoside 5'-phosphate + diphosphate + H(+). In terms of biological role, nucleoside triphosphate pyrophosphatase. May have a dual role in cell division arrest and in preventing the incorporation of modified nucleotides into cellular nucleic acids. The sequence is that of Nucleoside triphosphate pyrophosphatase from Campylobacter jejuni subsp. doylei (strain ATCC BAA-1458 / RM4099 / 269.97).